Reading from the N-terminus, the 453-residue chain is Trypanin (453 aa).

Positions 1-10 (MPPRTAAERG) are enriched in basic and acidic residues. Positions 1 to 22 (MPPRTAAERGGRRKSVKAPPPV) are disordered. 2 coiled-coil regions span residues 60–156 (TITK…EMNV) and 185–377 (SCEA…LVEE).

It belongs to the DRC4 family.

It is found in the cytoplasm. Its subcellular location is the cytoskeleton. The protein resides in the cell projection. The protein localises to the cilium. It localises to the flagellum. Its function is as follows. Cytoskeletal linker that plays a central role in the flagellum cell motility. Required for directional cell motility. Plays a role as part of a dynein regulatory system that regulates flagellar beat in response to signals from the central pair apparatus and radial spokes in procyclic cells. Also plays an essential role in the bloodstream form of the trypanosomes as its silencing is lethal for the circulating form. The protein is Trypanin of Trypanosoma brucei rhodesiense.